We begin with the raw amino-acid sequence, 404 residues long: MENEYKRLVLLEGLECINKHQFNLFKSLMVKDLNLEEDNQEKYTTFQIANMMVKKFPADAGLDRLINFCERVPTLKKRAEILKKERSEVTEETSLEINRQEASPATPTSTTSHMLASERGKTSTTQEETSTAQKRKGMSEEKTDVKKIKASGKADQPPCCEGPTATCQSPISQVSSSASSNIPSAKNQKSQPQNQNIPRGAVLHSEPLTVMVLTATDPFEYESPEHEVKNMFHATVATVSQYFHVKVFNIDLKEKFTKNNFITISNYFESKGILEINETSSVLEAAPKQMIEVPNCITRNANASPKICDIQKGTSGTVFYGVFTLHKKKVKTQNTSYEIKDGSGSIEVVGSGQWHNINCKEGDKLHLFCFHLKRERGQPKLVCGDHSFVKVTKAGKKKEASTVQ.

The Pyrin domain occupies methionine 1–glutamate 88. A disordered region spans residues glutamate 85–proline 198. Low complexity-rich tracts occupy residues alanine 102–serine 112 and threonine 122–alanine 132. Residues glycine 137–lysine 147 are compositionally biased toward basic and acidic residues. Residues glutamine 168–alanine 185 show a composition bias toward low complexity. Residues lysine 186 to isoleucine 197 are compositionally biased toward polar residues. The HIN-200 domain occupies proline 192 to threonine 392.

Belongs to the HIN-200 family.

It localises to the nucleus. Its function is as follows. May act as a transcriptional regulator in the myeloid lineage. Inhibits cell growth via p53/TP53 and RB1-dependent and independent pathways. This is Interferon-activable protein 205-A (Ifi205a) from Mus musculus (Mouse).